Consider the following 360-residue polypeptide: Cysteine proteinase 2 (360 aa).

Positions 1–19 (MVPRRLFVLAVVVLADTAA) are cleaved as a signal peptide. Positions 20 to 142 (VVNSGFADSN…NHRMRAAAVA (123 aa)) are cleaved as a propeptide — activation peptide. Asn-125 carries N-linked (GlcNAc...) asparagine glycosylation. Disulfide bonds link Cys-164/Cys-207 and Cys-198/Cys-240. Cys-167 is an active-site residue. N-linked (GlcNAc...) asparagine glycosylation occurs at Asn-256. Cys-298 and Cys-348 form a disulfide bridge. Residues His-307 and Asn-327 contribute to the active site.

It belongs to the peptidase C1 family. Expressed at the onset of germination.

It localises to the vacuole. Functionally, involved in the degradation of the storage protein zein. May play a role in proteolysis during emergencies. This chain is Cysteine proteinase 2 (CCP2), found in Zea mays (Maize).